A 61-amino-acid polypeptide reads, in one-letter code: Potassium channel toxin alpha-KTx 3.18 (61 aa).

Residues 1-23 (MKMFFTVLVTLFVCSMIIGICEG) form the signal peptide. Cystine bridges form between Cys-30/Cys-50, Cys-36/Cys-55, and Cys-40/Cys-57. Lys-60 is modified (lysine amide).

As to expression, expressed by the venom gland.

Its subcellular location is the secreted. In terms of biological role, inhibits voltage-gated potassium channel rKv1.1/KCNA1 at nanomolar ranges (IC(50)=90 +-2 nM, reduction of current by 30% at 50 nM or toxin). In Mesobuthus eupeus (Lesser Asian scorpion), this protein is Potassium channel toxin alpha-KTx 3.18.